Here is a 199-residue protein sequence, read N- to C-terminus: Transgelin-3 (199 aa).

Residues 24 to 136 (ADLENKLVDW…RTLMALGSVA (113 aa)) form the Calponin-homology (CH) domain. S163 is modified (phosphoserine). A Calponin-like repeat occupies 174-199 (IGLQMGSNKGASQAGMTGYGMPRQIM). Over residues 176–188 (LQMGSNKGASQAG) the composition is skewed to polar residues. Residues 176–199 (LQMGSNKGASQAGMTGYGMPRQIM) are disordered.

The protein belongs to the calponin family. As to expression, widely expressed in the brain. Expression is increased in the superior frontal cortex of alcoholics, but not in the motor cortex or cerebellum.

The polypeptide is Transgelin-3 (TAGLN3) (Homo sapiens (Human)).